The sequence spans 130 residues: MAQVQYYGTGRRKSSVARVRLVPGEGRIIVNGRDIRDYVPYESLVEVVKQPLVLTETFGSYDVLVNVSGGGFTGQAGAIRHGIARALLQVDPEYRQTLKRAGLLTRDSRVKERKKYGLKGARRAPQFSKR.

Belongs to the universal ribosomal protein uS9 family.

This is Small ribosomal subunit protein uS9 from Anoxybacillus flavithermus (strain DSM 21510 / WK1).